A 681-amino-acid polypeptide reads, in one-letter code: MDSDIQRQWGELAEEVRGHQFRYYVKDAPVISDGQFDELLRRLTALEEQYPELRTPDSPTQLVGGAGFVTEFRSVDHLERMLSLDNAFSSDELTAWDARVRGDIGQEPEYLCELKIDGVALSLVYENGVLVRGATRGDGRSGEDVTLNARTIEDVPERLAKSEKYPIPALLEVRGEVFFRLEDFEALNASLVEESKPPFANPRNSAAGSLRQKNPAITARRRLRMICHGLGRAEGFSPESLHDAYLALGEWGLPVSTHTTKVRGIAKVQERVNYWAEHRHDVEHEIDGVVVKVDTVALQRRLGSTSRAPRWAIAYKYPPEEATTELLDIRVSVGRTGRVTPFAYMTPVKVAGSTVSLATLHNASEVKRKGVLIGDTVVIRKAGDVIPEVLGPVADLRNGNEREFVMPTACPECGTTLAHEKEGDADIRCPNSRSCPAQLRERVFHVAGRGAFDIEALGYEAAIALLAAGVIEDEGDLFGLTADDLLRTDLFKTKSGALSANGARLLDNLDKAKQQPLWRVLVALSIRHVGPTAARALATEFGDLEAIEGASVEQLAAVEGVGATIAAAVVDWFSVDWHRAIVDKWRAAGVRTADERDDSIPRNLEGLSIVVTGSLPGFSRDEAKEAIIARGGKSASSVSKKTAFVVVGDSPGSKYDKAVELGVTILDEDGFRALLADGPPA.

Residues 33–37 (DGQFD), 83–84 (SL), and E113 contribute to the NAD(+) site. Catalysis depends on K115, which acts as the N6-AMP-lysine intermediate. 4 residues coordinate NAD(+): R136, E176, K292, and K316. Residues C410, C413, C429, and C435 each coordinate Zn(2+). The BRCT domain occupies 599–681 (SIPRNLEGLS…RALLADGPPA (83 aa)).

Belongs to the NAD-dependent DNA ligase family. LigA subfamily. It depends on Mg(2+) as a cofactor. Requires Mn(2+) as cofactor.

The catalysed reaction is NAD(+) + (deoxyribonucleotide)n-3'-hydroxyl + 5'-phospho-(deoxyribonucleotide)m = (deoxyribonucleotide)n+m + AMP + beta-nicotinamide D-nucleotide.. In terms of biological role, DNA ligase that catalyzes the formation of phosphodiester linkages between 5'-phosphoryl and 3'-hydroxyl groups in double-stranded DNA using NAD as a coenzyme and as the energy source for the reaction. It is essential for DNA replication and repair of damaged DNA. The polypeptide is DNA ligase (Mycobacteroides abscessus (strain ATCC 19977 / DSM 44196 / CCUG 20993 / CIP 104536 / JCM 13569 / NCTC 13031 / TMC 1543 / L948) (Mycobacterium abscessus)).